We begin with the raw amino-acid sequence, 219 residues long: Protein-L-isoaspartate O-methyltransferase (219 aa).

Residue serine 64 is part of the active site.

This sequence belongs to the methyltransferase superfamily. L-isoaspartyl/D-aspartyl protein methyltransferase family.

Its subcellular location is the cytoplasm. It catalyses the reaction [protein]-L-isoaspartate + S-adenosyl-L-methionine = [protein]-L-isoaspartate alpha-methyl ester + S-adenosyl-L-homocysteine. Functionally, catalyzes the methyl esterification of L-isoaspartyl residues in peptides and proteins that result from spontaneous decomposition of normal L-aspartyl and L-asparaginyl residues. It plays a role in the repair and/or degradation of damaged proteins. The chain is Protein-L-isoaspartate O-methyltransferase from Chlorobaculum parvum (strain DSM 263 / NCIMB 8327) (Chlorobium vibrioforme subsp. thiosulfatophilum).